We begin with the raw amino-acid sequence, 739 residues long: Phosphoribosylformylglycinamidine synthase subunit PurL (739 aa).

H54 is a catalytic residue. The ATP site is built by Y57 and K96. E98 is a binding site for Mg(2+). Residues 99–102 (SHNH) and R121 each bind substrate. H100 serves as the catalytic Proton acceptor. Position 122 (D122) interacts with Mg(2+). Position 245 (Q245) interacts with substrate. D273 provides a ligand contact to Mg(2+). 317 to 319 (ESQ) contacts substrate. ATP is bound by residues D500 and G537. N538 contributes to the Mg(2+) binding site. Residue S540 participates in substrate binding.

This sequence belongs to the FGAMS family. In terms of assembly, monomer. Part of the FGAM synthase complex composed of 1 PurL, 1 PurQ and 2 PurS subunits.

The protein resides in the cytoplasm. It carries out the reaction N(2)-formyl-N(1)-(5-phospho-beta-D-ribosyl)glycinamide + L-glutamine + ATP + H2O = 2-formamido-N(1)-(5-O-phospho-beta-D-ribosyl)acetamidine + L-glutamate + ADP + phosphate + H(+). The protein operates within purine metabolism; IMP biosynthesis via de novo pathway; 5-amino-1-(5-phospho-D-ribosyl)imidazole from N(2)-formyl-N(1)-(5-phospho-D-ribosyl)glycinamide: step 1/2. Functionally, part of the phosphoribosylformylglycinamidine synthase complex involved in the purines biosynthetic pathway. Catalyzes the ATP-dependent conversion of formylglycinamide ribonucleotide (FGAR) and glutamine to yield formylglycinamidine ribonucleotide (FGAM) and glutamate. The FGAM synthase complex is composed of three subunits. PurQ produces an ammonia molecule by converting glutamine to glutamate. PurL transfers the ammonia molecule to FGAR to form FGAM in an ATP-dependent manner. PurS interacts with PurQ and PurL and is thought to assist in the transfer of the ammonia molecule from PurQ to PurL. This is Phosphoribosylformylglycinamidine synthase subunit PurL from Bacillus cereus (strain ATCC 14579 / DSM 31 / CCUG 7414 / JCM 2152 / NBRC 15305 / NCIMB 9373 / NCTC 2599 / NRRL B-3711).